The primary structure comprises 189 residues: Glucose-6-phosphate isomerase (189 aa).

Positions 88, 90, 97, and 136 each coordinate Fe cation.

It belongs to the archaeal-type GPI family. As to quaternary structure, homodimer. Fe cation serves as cofactor.

The protein localises to the cytoplasm. The catalysed reaction is alpha-D-glucose 6-phosphate = beta-D-fructose 6-phosphate. It participates in carbohydrate degradation; glycolysis; D-glyceraldehyde 3-phosphate and glycerone phosphate from D-glucose: step 2/4. Inhibited by mannose 6-phosphate, fructose 1-phosphate and fructose 1,6-bisphosphate. In Pyrococcus furiosus (strain ATCC 43587 / DSM 3638 / JCM 8422 / Vc1), this protein is Glucose-6-phosphate isomerase (pgiA).